A 282-amino-acid chain; its full sequence is Glycine/sarcosine N-methyltransferase (282 aa).

The span at 1–23 (MTSTQNHPLQTQDDQQRFGQSPE) shows a compositional bias: polar residues. Positions 1-27 (MTSTQNHPLQTQDDQQRFGQSPESVRE) are disordered. Residues Tyr35, Trp43, Arg52, Ala76, Asp97, 123-124 (DW), and Leu141 contribute to the S-adenosyl-L-methionine site. Substrate is bound by residues Asn143, Arg176, and Tyr217.

This sequence belongs to the class I-like SAM-binding methyltransferase superfamily. Glycine N-methyltransferase family. As to quaternary structure, monomer.

It catalyses the reaction glycine + 2 S-adenosyl-L-methionine = N,N-dimethylglycine + 2 S-adenosyl-L-homocysteine + 2 H(+). The catalysed reaction is glycine + S-adenosyl-L-methionine = sarcosine + S-adenosyl-L-homocysteine + H(+). It carries out the reaction sarcosine + S-adenosyl-L-methionine = N,N-dimethylglycine + S-adenosyl-L-homocysteine + H(+). It participates in amine and polyamine biosynthesis; betaine biosynthesis via glycine pathway; betaine from glycine: step 1/3. It functions in the pathway amine and polyamine biosynthesis; betaine biosynthesis via glycine pathway; betaine from glycine: step 2/3. Its function is as follows. Catalyzes the methylation of glycine and sarcosine to sarcosine and dimethylglycine, respectively, with S-adenosylmethionine (AdoMet) acting as the methyl donor. It has strict specificity for glycine and sarcosine as the methyl group acceptors. This chain is Glycine/sarcosine N-methyltransferase, found in Parasynechococcus marenigrum (strain WH8102).